Here is a 700-residue protein sequence, read N- to C-terminus: Calpain-2 catalytic subunit (700 aa).

An N-acetylalanine modification is found at Ala-2. Residues 2 to 19 constitute a propeptide, anchors to the small subunit; that stretch reads AGIAIKLAKDREAAEGLG. The region spanning 45–344 is the Calpain catalytic domain; the sequence is LFQDPSFPAL…YSRLEICNLT (300 aa). Ca(2+) contacts are provided by Ile-89, Gly-91, and Asp-96. Residue Cys-105 is part of the active site. Ca(2+)-binding residues include Glu-175, Gln-229, and Lys-230. Residues His-262 and Asn-286 contribute to the active site. Ca(2+) is bound by residues Glu-292, Asp-299, Gln-319, and Glu-323. A domain III region spans residues 345–514; it reads PDTLTCDSYK…KKADYQAVDD (170 aa). Positions 515–529 are linker; the sequence is EIEANIEEIDANEED. Residues 530 to 700 form a domain IV region; the sequence is IDDGFRRLFV…LASWLSFSVL (171 aa). Ca(2+) is bound by residues Ala-542, Asp-545, Glu-547, Glu-552, Asp-585, Asp-587, Ser-589, Lys-591, Glu-596, Asp-615, Asp-617, Ser-619, Thr-621, Glu-626, Asp-658, and Asn-661. 2 consecutive EF-hand domains span residues 572 to 605 and 602 to 637; these read FSIE…TKIQ and TKIQ…AGFK.

This sequence belongs to the peptidase C2 family. Forms a heterodimer with a small (regulatory) subunit (CAPNS1). Interacts with CPEB3; this leads to cleavage of CPEB3. Ca(2+) serves as cofactor. Ubiquitous.

It is found in the cytoplasm. The protein localises to the cell membrane. The enzyme catalyses Broad endopeptidase specificity.. Activated by 200-1000 micromolar concentrations of calcium and inhibited by calpastatin. Functionally, calcium-regulated non-lysosomal thiol-protease which catalyzes limited proteolysis of substrates involved in cytoskeletal remodeling and signal transduction. Proteolytically cleaves MYOC at 'Arg-226'. Proteolytically cleaves CPEB3 following neuronal stimulation which abolishes CPEB3 translational repressor activity, leading to translation of CPEB3 target mRNAs. In Mus musculus (Mouse), this protein is Calpain-2 catalytic subunit (Capn2).